A 306-amino-acid polypeptide reads, in one-letter code: OVARIAN TUMOR DOMAIN-containing deubiquitinating enzyme 1 (306 aa).

The 215-residue stretch at 81-295 (IGIRRTRGDG…PGHYDILYPK (215 aa)) folds into the OTU domain. Asp89 is a catalytic residue. The active-site Nucleophile is the Cys92. Catalysis depends on residues His259 and His288.

It belongs to the peptidase C65 family.

It catalyses the reaction Thiol-dependent hydrolysis of ester, thioester, amide, peptide and isopeptide bonds formed by the C-terminal Gly of ubiquitin (a 76-residue protein attached to proteins as an intracellular targeting signal).. Cleavage activities for 'Lys-48'- and 'Lys-63'-linked ubiquitin (UB) tetramers is inhibited by UB aldehyde and N-ethylmaleimide but not by the metalloprotease inhibitors 1,10-phenanthroline and EDTA, and the serine protease inhibitor phenylmethylsulfonyl fluoride. Its function is as follows. Hydrolase that can remove conjugated ubiquitin from proteins in vitro and may therefore play an important regulatory role at the level of protein turnover by preventing degradation. Cysteine protease with a preference for Met-1 and 'Lys-48' over 'Lys-63'-linked ubiquitin (UB) tetramers (e.g. Ub2, Ub3 and Ub4) as substrates. The sequence is that of OVARIAN TUMOR DOMAIN-containing deubiquitinating enzyme 1 from Arabidopsis thaliana (Mouse-ear cress).